The chain runs to 977 residues: Mast/stem cell growth factor receptor Kit (977 aa).

A signal peptide spans 1–25; the sequence is MRGARGAWDFLFVLLLLLLVQTGSS. Residues 26 to 525 lie on the Extracellular side of the membrane; it reads QPSVSPGELS…QIHAHTLFTP (500 aa). Ig-like C2-type domains lie at 27–112, 121–205, 212–309, 318–411, and 414–508; these read PSVS…VFVR, DLPL…LKVR, PVVS…LEVV, PMMN…VYVN, and PEIL…FNFA. Cysteine 58 and cysteine 97 are oxidised to a cystine. Residues asparagine 94, asparagine 130, and asparagine 145 are each glycosylated (N-linked (GlcNAc...) asparagine). Disulfide bonds link cysteine 136-cysteine 186, cysteine 151-cysteine 183, and cysteine 233-cysteine 291. Asparagine 284, asparagine 294, asparagine 301, asparagine 321, asparagine 353, asparagine 368, asparagine 401, asparagine 464, and asparagine 487 each carry an N-linked (GlcNAc...) asparagine glycan. Cysteine 429 and cysteine 492 form a disulfide bridge. The chain crosses the membrane as a helical span at residues 526 to 546; the sequence is LLIGFVIAAGLMCIFVMILTY. Residues 547-977 are Cytoplasmic-facing; sequence KYLQKPMYEV…TQPLLVHEDV (431 aa). Tyrosine 548 and tyrosine 554 each carry phosphotyrosine. Position 569 (tyrosine 569) interacts with Mg(2+). Residues tyrosine 569 and tyrosine 571 each carry the phosphotyrosine; by autocatalysis modification. The interval 569 to 571 is important for interaction with phosphotyrosine-binding proteins; that stretch reads YVY. The Protein kinase domain occupies 590-938; that stretch reads LSFGKTLGAG…ISESTNHIYS (349 aa). ATP contacts are provided by residues 597 to 604, lysine 624, and 672 to 678; these read GAGAFGKV and EYCCYGD. 2 positions are modified to phosphotyrosine; by autocatalysis: tyrosine 704 and tyrosine 722. A Phosphotyrosine modification is found at tyrosine 731. Phosphoserine; by PKC/PRKCA is present on residues serine 742 and serine 747. Aspartate 793 functions as the Proton acceptor in the catalytic mechanism. Residue arginine 797 coordinates ATP. Mg(2+) contacts are provided by asparagine 798 and aspartate 811. A Phosphoserine modification is found at serine 822. Residue tyrosine 824 is modified to Phosphotyrosine; by autocatalysis. Position 892 is a phosphoserine (serine 892). Phosphotyrosine is present on tyrosine 901. Tyrosine 937 carries the phosphotyrosine; by autocatalysis modification. At serine 960 the chain carries Phosphoserine.

This sequence belongs to the protein kinase superfamily. Tyr protein kinase family. CSF-1/PDGF receptor subfamily. In terms of assembly, monomer in the absence of bound KITLG/SCF. Homodimer in the presence of bound KITLG/SCF, forming a heterotetramer with two KITLG/SCF molecules. Interacts (via phosphorylated tyrosine residues) with the adapter proteins GRB2 and GRB7 (via SH2 domain), and SH2B2/APS. Interacts (via C-terminus) with MPDZ (via the tenth PDZ domain). Interacts (via phosphorylated tyrosine residues) with PIK3R1 and PIK3CD. Interacts (via phosphorylated tyrosine) with CRK (isoform Crk-II), FYN, SHC1 and MATK/CHK (via SH2 domain). Interacts with LYN and FES/FPS. Interacts (via phosphorylated tyrosine residues) with the protein phosphatases PTPN6/SHP-1 (via SH2 domain), PTPN11/SHP-2 (via SH2 domain) and PTPRU. Interacts with PLCG1. Interacts with DOK1 and TEC. Interacts with IL1RAP (independent of stimulation with KITLG/SCF). A mast cell-specific KITLG/SCF-induced interleukin-33 signaling complex contains IL1RL1, IL1RAP, KIT and MYD88. Ubiquitinated by SOCS6. KIT is rapidly ubiquitinated after autophosphorylation induced by KITLG/SCF binding, leading to internalization and degradation. In terms of processing, autophosphorylated on tyrosine residues. KITLG/SCF binding promotes autophosphorylation. Phosphorylated tyrosine residues are important for interaction with specific binding partners.

It localises to the cell membrane. It carries out the reaction L-tyrosyl-[protein] + ATP = O-phospho-L-tyrosyl-[protein] + ADP + H(+). Its activity is regulated as follows. Present in an inactive conformation in the absence of bound ligand. KITLG/SCF binding leads to dimerization and activation by autophosphorylation on tyrosine residues. Activity is down-regulated by PRKCA-mediated phosphorylation on serine residues. In terms of biological role, tyrosine-protein kinase that acts as a cell-surface receptor for the cytokine KITLG/SCF and plays an essential role in the regulation of cell survival and proliferation, hematopoiesis, stem cell maintenance, gametogenesis, mast cell development, migration and function, and in melanogenesis. In response to KITLG/SCF binding, KIT can activate several signaling pathways. Phosphorylates PIK3R1, PLCG1, SH2B2/APS and CBL. Activates the AKT1 signaling pathway by phosphorylation of PIK3R1, the regulatory subunit of phosphatidylinositol 3-kinase. Activated KIT also transmits signals via GRB2 and activation of RAS, RAF1 and the MAP kinases MAPK1/ERK2 and/or MAPK3/ERK1. Promotes activation of STAT family members STAT1, STAT3, STAT5A and STAT5B. Activation of PLCG1 leads to the production of the cellular signaling molecules diacylglycerol and inositol 1,4,5-trisphosphate. KIT signaling is modulated by protein phosphatases, and by rapid internalization and degradation of the receptor. Activated KIT promotes phosphorylation of the protein phosphatases PTPN6/SHP-1 and PTPRU, and of the transcription factors STAT1, STAT3, STAT5A and STAT5B. Promotes phosphorylation of PIK3R1, CBL, CRK (isoform Crk-II), LYN, MAPK1/ERK2 and/or MAPK3/ERK1, PLCG1, SRC and SHC1. The protein is Mast/stem cell growth factor receptor Kit (KIT) of Bos taurus (Bovine).